We begin with the raw amino-acid sequence, 514 residues long: 2,3-bisphosphoglycerate-independent phosphoglycerate mutase (514 aa).

Mn(2+) is bound by residues Asp-14 and Ser-64. The Phosphoserine intermediate role is filled by Ser-64. Substrate-binding positions include His-125, 155–156, Arg-187, Arg-193, 263–266, and Lys-336; these read RD and RADR. 5 residues coordinate Mn(2+): Asp-403, His-407, Asp-444, His-445, and His-463.

Belongs to the BPG-independent phosphoglycerate mutase family. As to quaternary structure, monomer. The cofactor is Mn(2+).

The catalysed reaction is (2R)-2-phosphoglycerate = (2R)-3-phosphoglycerate. It participates in carbohydrate degradation; glycolysis; pyruvate from D-glyceraldehyde 3-phosphate: step 3/5. Catalyzes the interconversion of 2-phosphoglycerate and 3-phosphoglycerate. The protein is 2,3-bisphosphoglycerate-independent phosphoglycerate mutase of Shewanella sediminis (strain HAW-EB3).